Reading from the N-terminus, the 22-residue chain is Caerin-3.1 (22 aa).

Lys22 is subject to Lysine amide.

The protein belongs to the frog skin active peptide (FSAP) family. Caerin subfamily. Expressed by the skin dorsal glands.

Its subcellular location is the secreted. In terms of biological role, antibacterial peptide with narrow spectrum of activity. Inhibits the formation of NO by neuronal nitric oxide synthase. This is Caerin-3.1 from Litoria rothii (Roth's tree frog).